The following is a 404-amino-acid chain: Propionate kinase (404 aa).

Belongs to the acetokinase family. PduW subfamily.

It is found in the cytoplasm. It catalyses the reaction propanoate + ATP = propanoyl phosphate + ADP. It functions in the pathway polyol metabolism; 1,2-propanediol degradation. Functionally, works with phosphate acetyltransferase (pta) to capture exogenous propionate and regenerate propionyl-CoA during degradation of 1,2-propanediol (1,2-PD). This chain is Propionate kinase, found in Citrobacter koseri (strain ATCC BAA-895 / CDC 4225-83 / SGSC4696).